We begin with the raw amino-acid sequence, 321 residues long: tRNA-dihydrouridine synthase B (321 aa).

Residues 16–18 (PMA) and Gln70 contribute to the FMN site. The Proton donor role is filled by Cys100. FMN is bound by residues Lys139, 200–202 (NGD), and 224–225 (GR).

Belongs to the Dus family. DusB subfamily. FMN serves as cofactor.

It carries out the reaction a 5,6-dihydrouridine in tRNA + NAD(+) = a uridine in tRNA + NADH + H(+). The enzyme catalyses a 5,6-dihydrouridine in tRNA + NADP(+) = a uridine in tRNA + NADPH + H(+). Its function is as follows. Catalyzes the synthesis of 5,6-dihydrouridine (D), a modified base found in the D-loop of most tRNAs, via the reduction of the C5-C6 double bond in target uridines. The polypeptide is tRNA-dihydrouridine synthase B (Yersinia pestis).